Reading from the N-terminus, the 417-residue chain is Gamma-glutamyl phosphate reductase (417 aa).

It belongs to the gamma-glutamyl phosphate reductase family.

It is found in the cytoplasm. The catalysed reaction is L-glutamate 5-semialdehyde + phosphate + NADP(+) = L-glutamyl 5-phosphate + NADPH + H(+). Its pathway is amino-acid biosynthesis; L-proline biosynthesis; L-glutamate 5-semialdehyde from L-glutamate: step 2/2. Its function is as follows. Catalyzes the NADPH-dependent reduction of L-glutamate 5-phosphate into L-glutamate 5-semialdehyde and phosphate. The product spontaneously undergoes cyclization to form 1-pyrroline-5-carboxylate. The chain is Gamma-glutamyl phosphate reductase from Serratia proteamaculans (strain 568).